The primary structure comprises 523 residues: Tryptophan 6-halogenase SttH (523 aa).

Residues Gly14, Ser40, Ile43, Val46, Val48, and Ala51 each coordinate FAD. Lys79 is a catalytic residue. Pro97 lines the L-tryptophan pocket. Residues Val203 and Leu354 each contribute to the FAD site. Residues Thr365 and Gly366 each coordinate chloride. Residue Ile367 participates in FAD binding. L-tryptophan contacts are provided by Tyr456 and Tyr457.

Belongs to the flavin-dependent halogenase family. Bacterial tryptophan halogenase subfamily. In terms of assembly, homodimer.

It carries out the reaction L-tryptophan + FADH2 + chloride + O2 = 6-chloro-L-tryptophan + FAD + 2 H2O. The catalysed reaction is D-tryptophan + FADH2 + chloride + O2 = 6-chloro-D-tryptophan + FAD + 2 H2O. Functionally, catalyzes the chlorination of tryptophan (Trp) at C6 position to yield 6-chloro-tryptophan. Accepts both L and D-Trp as the substrates. The enzyme also uses bromide to yield 6-bromo-Trp. In vitro, can also catalyze the halogenation of 3-indolepropionic acid, N-methyltryptophan and non-indolic aromatic substrates such as kynurenine, anthranilamide and N-phenylanthranilic acid. The chain is Tryptophan 6-halogenase SttH from Streptomyces toxytricini (Actinomyces toxytricini).